Consider the following 252-residue polypeptide: 5-oxoprolinase subunit A (252 aa).

This sequence belongs to the LamB/PxpA family. As to quaternary structure, forms a complex composed of PxpA, PxpB and PxpC.

The catalysed reaction is 5-oxo-L-proline + ATP + 2 H2O = L-glutamate + ADP + phosphate + H(+). Its function is as follows. Catalyzes the cleavage of 5-oxoproline to form L-glutamate coupled to the hydrolysis of ATP to ADP and inorganic phosphate. The protein is 5-oxoprolinase subunit A of Bacillus cytotoxicus (strain DSM 22905 / CIP 110041 / 391-98 / NVH 391-98).